Consider the following 213-residue polypeptide: Pyridoxine/pyridoxamine 5'-phosphate oxidase (213 aa).

Substrate contacts are provided by residues R8–Y11 and K67. Residues R62–K67, F77–T78, R83, K84, and Q106 each bind FMN. Substrate contacts are provided by Y124, R128, and S132. FMN is bound by residues Q141–S142 and W186. Residue R192–H194 participates in substrate binding. Residue R196 participates in FMN binding.

This sequence belongs to the pyridoxamine 5'-phosphate oxidase family. Homodimer. Requires FMN as cofactor.

The enzyme catalyses pyridoxamine 5'-phosphate + O2 + H2O = pyridoxal 5'-phosphate + H2O2 + NH4(+). The catalysed reaction is pyridoxine 5'-phosphate + O2 = pyridoxal 5'-phosphate + H2O2. It functions in the pathway cofactor metabolism; pyridoxal 5'-phosphate salvage; pyridoxal 5'-phosphate from pyridoxamine 5'-phosphate: step 1/1. It participates in cofactor metabolism; pyridoxal 5'-phosphate salvage; pyridoxal 5'-phosphate from pyridoxine 5'-phosphate: step 1/1. Functionally, catalyzes the oxidation of either pyridoxine 5'-phosphate (PNP) or pyridoxamine 5'-phosphate (PMP) into pyridoxal 5'-phosphate (PLP). The polypeptide is Pyridoxine/pyridoxamine 5'-phosphate oxidase (Shewanella sediminis (strain HAW-EB3)).